The sequence spans 1392 residues: MNYSFTEKKRIRKSFAKRENVLEVPFLLATQIDSYAKFLQLENAFDKRTDDGLQAAFNSIFPIVSHNGYARLEFVYYTLGEPLFDIPECQLRGITYAAPLRARIRLVILDKEASKPTVKEVRENEVYMGEIPLMTPSGSFVINGTERVIVSQLHRSPGVFFEHDKGKTHSSGKLLFSARIIPYRGSWLDFEFDPKDLLYFRIDRRRKMPVTILLKALGYNNEQILDIFYDKETFYLSSNGVQTDLVAGRLKGETAKVDILDKEGNVLVAKGKRITAKNIRDITNAGLTRLDVEQESLLGKALAADLIDSETGEVLASANDEITEELLAKFDINGVKEITTLYINELDQGAYISNTLRTDETAGRQAARVAIYRMMRPGEPPTEEAVEQLFNRLFFSEDSYDLSRVGRMKFNTRTYEQKLSEAQQNSWYGRLLNETFAGAADKGGYVLSVEDIVASIATLVELRNGHGEVDDIDHLGNRRVRSVGELTENQFRSGLARVERAVKERLNQAESENLMPHDLINAKPVSAAIKEFFGSSQLSQFMDQTNPLSEVTHKRRVSALGPGGLTRERAGFEVRDVHPTHYGRVCPIETPEGPNIGLINSLSVYARTNDYGFLETPYRRVIDGKVTEEIDYLSAIEEGRYVIAQANADLDSDGNLIGDLVTCREKGETIMATPDRVQYMDVATGQVVSVAASLIPFLEHDDANRALMGANMQRQAVPCLRPEKPMVGTGIERSVAVDSATAIVARRGGVVEYVDANRVVIRVHDDEATAGEVGVDIYNLVKFTRSNQSTNINQRPAVKAGDVLQRGDLVADGASTDLGELALGQNMTIAFMPWNGYNYEDSILISEKVAADDRYTSIHIEELNVVARDTKLGAEDITRDIPNLSERMQNRLDESGIVYIGAEVEAGDVLVGKVTPKGETQLTPEEKLLRAIFGEKASDVKDTSLRMPTGMSGTVIDVQVFTREGIQRDKRAQSIIDSELKRYRLDLNDQLRIFDNDAFDRIERMIVGQKANGGPMKLAKGSEITTEYLAGLPSRHDWFDIRLTDEDLAKQLELIKLSLQQKREEADELYEIKKKKLTQGDELQPGVQKMVKVFIAIKRRLQAGDKMAGRHGNKGVVSRILPVEDMPYMADGRPVDIVLNPLGVPSRMNIGQILEVHLGWAAKGIGERIDRMLKERRKAGELREFLNKLYNGSGKKEDLDSLTDEEIIELASNLRKGASFASPVFDGAKESEIREMLNLAYPSEDPEVEKLGFNDSKTQITLYDGRSGEAFDRKVTVGVMHYLKLHHLVDEKMHARSTGPYSLVTQQPLGGKAQFGGQRFGEMEVWALEAYGAAYTLQEMLTVKSDDVNGRTKMYENIVKGEHKIDAGMPESFNVLVKEIRSLGLDIDLERY.

Belongs to the RNA polymerase beta chain family. In terms of assembly, the RNAP catalytic core consists of 2 alpha, 1 beta, 1 beta' and 1 omega subunit. When a sigma factor is associated with the core the holoenzyme is formed, which can initiate transcription.

It carries out the reaction RNA(n) + a ribonucleoside 5'-triphosphate = RNA(n+1) + diphosphate. Functionally, DNA-dependent RNA polymerase catalyzes the transcription of DNA into RNA using the four ribonucleoside triphosphates as substrates. In Neisseria gonorrhoeae (strain NCCP11945), this protein is DNA-directed RNA polymerase subunit beta.